Here is a 1187-residue protein sequence, read N- to C-terminus: ATP-dependent DNA helicase MPH1 (1187 aa).

A Helicase ATP-binding domain is found at 144-311; it reads IVERAFYDNL…QIIDNLNISK (168 aa). 157-164 is a binding site for ATP; it reads LPTGLGKT. Positions 259–262 match the DEAH box motif; that stretch reads DEAH. The Helicase C-terminal domain maps to 486-681; it reads ELDDFFKNHE…FIQLRPQHRM (196 aa). Disordered stretches follow at residues 542-576, 781-848, and 941-1003; these read VENF…MTGM, DKLV…NNQV, and PEKP…LGVK. The segment covering 547–556 has biased composition (basic residues); the sequence is KKKQKGQTKK. The segment covering 564 to 576 has biased composition (polar residues); it reads TRSSSENAQMTGM. A compositionally biased stretch (basic and acidic residues) spans 781–817; it reads DKLVDSDSESEVDKENENVIQEVDKSKNQEQNDHIIT. A compositionally biased stretch (polar residues) spans 822–848; it reads TEQSVAGNTKSTTNGTSYSEPENNNQV. Low complexity predominate over residues 967 to 977; it reads SNSISIPSSTT. Residues 980–989 are compositionally biased toward basic and acidic residues; that stretch reads SHNEVTRKVV.

It belongs to the DEAD box helicase family. DEAH subfamily. FANCM sub-subfamily. In terms of assembly, interacts with the MHF histone-fold complex to form the FANCM-MHF complex.

It is found in the nucleus. It catalyses the reaction ATP + H2O = ADP + phosphate + H(+). ATP-dependent DNA helicase involved in DNA damage repair by homologous recombination and in genome maintenance. Capable of unwinding D-loops. Plays a role in limiting crossover recombinants during mitotic DNA double-strand break (DSB) repair. Component of a FANCM-MHF complex which promotes gene conversion at blocked replication forks, probably by reversal of the stalled fork. The sequence is that of ATP-dependent DNA helicase MPH1 from Candida albicans (strain SC5314 / ATCC MYA-2876) (Yeast).